The sequence spans 293 residues: 4-diphosphocytidyl-2-C-methyl-D-erythritol kinase (293 aa).

The active site involves Lys16. 99–109 (PMGAGLGGGSS) provides a ligand contact to ATP. Asp141 is a catalytic residue.

The protein belongs to the GHMP kinase family. IspE subfamily.

The catalysed reaction is 4-CDP-2-C-methyl-D-erythritol + ATP = 4-CDP-2-C-methyl-D-erythritol 2-phosphate + ADP + H(+). Its pathway is isoprenoid biosynthesis; isopentenyl diphosphate biosynthesis via DXP pathway; isopentenyl diphosphate from 1-deoxy-D-xylulose 5-phosphate: step 3/6. In terms of biological role, catalyzes the phosphorylation of the position 2 hydroxy group of 4-diphosphocytidyl-2C-methyl-D-erythritol. This is 4-diphosphocytidyl-2-C-methyl-D-erythritol kinase from Burkholderia cenocepacia (strain HI2424).